Reading from the N-terminus, the 213-residue chain is Orotate phosphoribosyltransferase (213 aa).

Lys26 serves as a coordination point for 5-phospho-alpha-D-ribose 1-diphosphate. 34 to 35 (FF) is an orotate binding site. Residues 72 to 73 (YK), Arg99, Lys100, Lys103, His105, and 124 to 132 (DDVITAGTA) each bind 5-phospho-alpha-D-ribose 1-diphosphate. Residues Thr128 and Arg156 each contribute to the orotate site.

It belongs to the purine/pyrimidine phosphoribosyltransferase family. PyrE subfamily. Homodimer. Mg(2+) serves as cofactor.

The enzyme catalyses orotidine 5'-phosphate + diphosphate = orotate + 5-phospho-alpha-D-ribose 1-diphosphate. The protein operates within pyrimidine metabolism; UMP biosynthesis via de novo pathway; UMP from orotate: step 1/2. Its function is as follows. Catalyzes the transfer of a ribosyl phosphate group from 5-phosphoribose 1-diphosphate to orotate, leading to the formation of orotidine monophosphate (OMP). The chain is Orotate phosphoribosyltransferase from Vibrio atlanticus (strain LGP32) (Vibrio splendidus (strain Mel32)).